We begin with the raw amino-acid sequence, 455 residues long: Exodeoxyribonuclease 7 large subunit (455 aa).

This sequence belongs to the XseA family. In terms of assembly, heterooligomer composed of large and small subunits.

It is found in the cytoplasm. The catalysed reaction is Exonucleolytic cleavage in either 5'- to 3'- or 3'- to 5'-direction to yield nucleoside 5'-phosphates.. Its function is as follows. Bidirectionally degrades single-stranded DNA into large acid-insoluble oligonucleotides, which are then degraded further into small acid-soluble oligonucleotides. This is Exodeoxyribonuclease 7 large subunit from Escherichia coli O7:K1 (strain IAI39 / ExPEC).